A 483-amino-acid polypeptide reads, in one-letter code: tRNA sulfurtransferase (483 aa).

One can recognise a THUMP domain in the interval 61–165 (AEVLEILTTT…DELLNQVIAR (105 aa)). ATP contacts are provided by residues 183-184 (LI), Lys-265, Gly-287, and Gln-296. Cysteines 344 and 457 form a disulfide. Residues 405-483 (EEGNAVVLDI…GFNNVKVYRP (79 aa)) form the Rhodanese domain. Cys-457 functions as the Cysteine persulfide intermediate in the catalytic mechanism.

It belongs to the ThiI family.

The protein localises to the cytoplasm. It catalyses the reaction [ThiI sulfur-carrier protein]-S-sulfanyl-L-cysteine + a uridine in tRNA + 2 reduced [2Fe-2S]-[ferredoxin] + ATP + H(+) = [ThiI sulfur-carrier protein]-L-cysteine + a 4-thiouridine in tRNA + 2 oxidized [2Fe-2S]-[ferredoxin] + AMP + diphosphate. It carries out the reaction [ThiS sulfur-carrier protein]-C-terminal Gly-Gly-AMP + S-sulfanyl-L-cysteinyl-[cysteine desulfurase] + AH2 = [ThiS sulfur-carrier protein]-C-terminal-Gly-aminoethanethioate + L-cysteinyl-[cysteine desulfurase] + A + AMP + 2 H(+). The protein operates within cofactor biosynthesis; thiamine diphosphate biosynthesis. Catalyzes the ATP-dependent transfer of a sulfur to tRNA to produce 4-thiouridine in position 8 of tRNAs, which functions as a near-UV photosensor. Also catalyzes the transfer of sulfur to the sulfur carrier protein ThiS, forming ThiS-thiocarboxylate. This is a step in the synthesis of thiazole, in the thiamine biosynthesis pathway. The sulfur is donated as persulfide by IscS. The protein is tRNA sulfurtransferase of Vibrio cholerae serotype O1 (strain ATCC 39315 / El Tor Inaba N16961).